A 1220-amino-acid chain; its full sequence is MGKKQKNKSEDSTKDDIDLDALAAEIEGAGAAKEQEPQKSKGKKKKEKKKQDFDEDDILKELEELSLEAQGIKADRETVAVKPTENNEEEFTSKDKKKKGQKGKKQSFDDNDSEELEDKDSKSKKTAKPKVEMYSGSDDDDDFNKLPKKAKGKAQKSNKKWDGSEEDEDNSKKIKERSRVNSSGESGDESDEFLQSRKGQKKNQKNKPGPNIESGNEDDDSSFKIKTVAQKKAEKKERERKKRDEEKAKLRKLKEKEESETGKKDQSKQKESQRKSEEETVKSKVTLDTGVIPASEEKAETPTAAEDDNEGDKKKKDKKKKKGEKEEKEKEKKKGPSKATVKAMQEALAKLKEEEERQKREEEERIKRLEELEAKRKEEERLEQEKRERKKQKEKERKERLKKEGKLLTKSQREARARAEATLKLLQAQGVEVPSKDSLPKKRPIYEDKKRKKIPQQLESKEVSESMELCAAVEVMEQGVPEKEETPPPVEPEEEEDTEDAGLDDWEAMASDEETEKVEGNTVHIEVKENPEEEEEEEEEEEEDEESEEEEEEEGESEGSEGDEEDEKVSDEKDSGKTLDKKPSKEMSSDSEYDSDDDRTKEERAYDKAKRRIEKRRLEHSKNVNTEKLRAPIICVLGHVDTGKTKILDKLRHTHVQDGEAGGITQQIGATNVPLEAINEQTKMIKNFGRENVRIPGMLIIDTPGHESFSNLRNRGSSLCDIAILVVDIMHGGEPQKMKPTNLPKPKKCPFMVALNKIDRLYDWKKSPDSDVAATLKKQKKNTKDEFEERAKAIIVEFAQQGLNAALFYENKDPRTFVSLVPTSAHTGDGMGSLIYLLVELTQTMLSKRLAHCEELRAQVMEVKALPGMGTTIDVILINGRLKEGDTIIVPGVEGPIVTQIRGLLLPPPMKELRVKNQYEKHKEVEAAQGVKILGKDLEKTLAGLPLLVAYKEDEIPVLKDELIHELKQTLNAIKLEEKGVYVQASTLGSLEALLEFLKTSEVPYAGINIGPVHKKDVMKASVMLEHDPQYAVILAFDVRIERDAQEMADSLGVRIFSAEIIYHLFDAFTKYRQDYKKQKQEKFKHIAVFPCKMKILPQYIFNSRDPIVMGVTVEAGQVKQGTPMCVPSKNFVDIGIVTSIEINHKQVDVAKKGQEVCVKIEPIPGESPKMFGRHFEATDILVSKISRQSIDALKDWFRDEMQKSDWQLIVELKKVFEII.

Disordered stretches follow at residues 1 to 417 (MGKK…EARA) and 430 to 608 (GVEV…AYDK). Residues 7–16 (NKSEDSTKDD) are compositionally biased toward basic and acidic residues. Positions 20–32 (DALAAEIEGAGAA) are enriched in low complexity. At serine 66 the chain carries Phosphoserine. Positions 95-105 (DKKKKGQKGKK) are enriched in basic residues. A phosphoserine mark is found at serine 107 and serine 113. Over residues 109-118 (DDNDSEELED) the composition is skewed to acidic residues. Residue tyrosine 134 is modified to Phosphotyrosine. A phosphoserine mark is found at serine 135 and serine 137. The span at 146–158 (LPKKAKGKAQKSN) shows a compositional bias: basic residues. A phosphoserine mark is found at serine 164, serine 171, serine 182, serine 183, serine 186, serine 190, serine 214, and serine 222. A compositionally biased stretch (basic and acidic residues) spans 170-179 (NSKKIKERSR). Positions 231–282 (KKAEKKERERKKRDEEKAKLRKLKEKEESETGKKDQSKQKESQRKSEEETVK) are enriched in basic and acidic residues. Phosphothreonine is present on threonine 301. Basic and acidic residues-rich tracts occupy residues 323 to 334 (GEKEEKEKEKKK), 349 to 417 (AKLK…EARA), and 434 to 449 (PSKDSLPKKRPIYEDK). Serine 438 is subject to Phosphoserine. Composition is skewed to acidic residues over residues 491–516 (EPEEEEDTEDAGLDDWEAMASDEETE) and 531–569 (PEEEEEEEEEEEEDEESEEEEEEEGESEGSEGDEEDEKV). Threonine 498 carries the phosphothreonine modification. Phosphoserine is present on residues serine 547, serine 557, serine 560, serine 588, serine 589, serine 591, and serine 595. Positions 570 to 588 (SDEKDSGKTLDKKPSKEMS) are enriched in basic and acidic residues. Residues 598–608 (DRTKEERAYDK) are compositionally biased toward basic and acidic residues. The 218-residue stretch at 629–846 (LRAPIICVLG…LLVELTQTML (218 aa)) folds into the tr-type G domain. The tract at residues 638–645 (GHVDTGKT) is G1. Residues 640-646 (VDTGKTK) and 663-665 (GIT) each bind GTP. The G2 stretch occupies residues 663 to 667 (GITQQ). Residues 702–705 (DTPG) are G3. The active site involves histidine 706. Residues 756–757 (NK), 759–760 (DR), and 825–826 (AH) each bind GTP. A G4 region spans residues 756–759 (NKID). Residues 824 to 826 (SAH) are G5. Position 1168 is a phosphoserine (serine 1168).

Belongs to the TRAFAC class translation factor GTPase superfamily. Classic translation factor GTPase family. IF-2 subfamily. In terms of assembly, interacts through its C-terminal domain (CTD) with the CTD of eIF1A (EIF1AX) or with the CTD of EIF5 (mutually exclusive) through a common binding site. Interacts with eIF1A (EIF1AX) from the location of the start codon by the 43S complex until the formation of the 80S complex. Interacts with ANXA5 in a calcium and phospholipid-dependent manner. The cofactor is a monovalent cation.

It localises to the cytoplasm. It carries out the reaction GTP + H2O = GDP + phosphate + H(+). Plays a role in translation initiation. Ribosome-dependent GTPase that promotes the joining of the 60S ribosomal subunit to the pre-initiation complex to form the 80S initiation complex with the initiator methionine-tRNA in the P-site base paired to the start codon. Together with eIF1A (EIF1AX), actively orients the initiator methionine-tRNA in a conformation that allows 60S ribosomal subunit joining to form the 80S initiation complex. Is released after formation of the 80S initiation complex. Its GTPase activity is not essential for ribosomal subunits joining, but GTP hydrolysis is needed for eIF1A (EIF1AX) ejection quickly followed by EIF5B release to form elongation-competent ribosomes. In contrast to its procaryotic homolog, does not promote recruitment of Met-rRNA to the small ribosomal subunit. The chain is Eukaryotic translation initiation factor 5B (EIF5B) from Pongo abelii (Sumatran orangutan).